The chain runs to 229 residues: GTP cyclohydrolase 1 (229 aa).

Positions 1–21 (MDAKIKPLRAGKSADARTDFQ) are disordered. Zn(2+) contacts are provided by C118, H121, and C189.

Belongs to the GTP cyclohydrolase I family. Toroid-shaped homodecamer, composed of two pentamers of five dimers.

The enzyme catalyses GTP + H2O = 7,8-dihydroneopterin 3'-triphosphate + formate + H(+). It functions in the pathway cofactor biosynthesis; 7,8-dihydroneopterin triphosphate biosynthesis; 7,8-dihydroneopterin triphosphate from GTP: step 1/1. This Rhodopseudomonas palustris (strain HaA2) protein is GTP cyclohydrolase 1.